The chain runs to 468 residues: 6-phosphogluconate dehydrogenase, decarboxylating (468 aa).

NADP(+) is bound by residues 10 to 15, 33 to 35, 74 to 76, and Asn102; these read GMAVMG, NRS, and IKS. Substrate contacts are provided by residues Asn102 and 128–130; that span reads SGG. Catalysis depends on Lys182, which acts as the Proton acceptor. Residue 185-186 participates in substrate binding; that stretch reads HN. Glu189 acts as the Proton donor in catalysis. Positions 190, 259, 286, 445, and 451 each coordinate substrate.

Belongs to the 6-phosphogluconate dehydrogenase family. Homodimer.

The catalysed reaction is 6-phospho-D-gluconate + NADP(+) = D-ribulose 5-phosphate + CO2 + NADPH. It participates in carbohydrate degradation; pentose phosphate pathway; D-ribulose 5-phosphate from D-glucose 6-phosphate (oxidative stage): step 3/3. In terms of biological role, catalyzes the oxidative decarboxylation of 6-phosphogluconate to ribulose 5-phosphate and CO(2), with concomitant reduction of NADP to NADPH. The chain is 6-phosphogluconate dehydrogenase, decarboxylating (gnd) from Buchnera aphidicola subsp. Baizongia pistaciae (strain Bp).